We begin with the raw amino-acid sequence, 559 residues long: DNA ligase (559 aa).

Glu247 contributes to the ATP binding site. The N6-AMP-lysine intermediate role is filled by Lys249. 6 residues coordinate ATP: Arg254, Arg269, Glu299, Phe339, Arg414, and Lys420.

It belongs to the ATP-dependent DNA ligase family. Requires Mg(2+) as cofactor.

The catalysed reaction is ATP + (deoxyribonucleotide)n-3'-hydroxyl + 5'-phospho-(deoxyribonucleotide)m = (deoxyribonucleotide)n+m + AMP + diphosphate.. It catalyses the reaction NAD(+) + (deoxyribonucleotide)n-3'-hydroxyl + 5'-phospho-(deoxyribonucleotide)m = (deoxyribonucleotide)n+m + AMP + beta-nicotinamide D-nucleotide.. Its function is as follows. DNA ligase that seals nicks in double-stranded DNA during DNA replication, DNA recombination and DNA repair. Shows high activity with either ATP or NAD(+). In Thermococcus fumicolans, this protein is DNA ligase.